The sequence spans 911 residues: Valine--tRNA ligase (911 aa).

A 'HIGH' region motif is present at residues 57–67 (PTVSGSLHVGH). Positions 599-603 (KMSKS) match the 'KMSKS' region motif. Residue lysine 602 participates in ATP binding. Residues 882 to 911 (EESAAEDAPETEVAVEASELGEPPVKKPKH) are disordered.

Belongs to the class-I aminoacyl-tRNA synthetase family. ValS type 2 subfamily. Monomer.

Its subcellular location is the cytoplasm. It catalyses the reaction tRNA(Val) + L-valine + ATP = L-valyl-tRNA(Val) + AMP + diphosphate. Functionally, catalyzes the attachment of valine to tRNA(Val). As ValRS can inadvertently accommodate and process structurally similar amino acids such as threonine, to avoid such errors, it has a 'posttransfer' editing activity that hydrolyzes mischarged Thr-tRNA(Val) in a tRNA-dependent manner. The polypeptide is Valine--tRNA ligase (Bifidobacterium longum subsp. infantis (strain ATCC 15697 / DSM 20088 / JCM 1222 / NCTC 11817 / S12)).